Here is a 570-residue protein sequence, read N- to C-terminus: Sulfite reductase [NADPH] hemoprotein beta-component (570 aa).

[4Fe-4S] cluster-binding residues include Cys434, Cys440, Cys479, and Cys483. Cys483 contacts siroheme.

This sequence belongs to the nitrite and sulfite reductase 4Fe-4S domain family. Alpha(8)-beta(8). The alpha component is a flavoprotein, the beta component is a hemoprotein. Siroheme is required as a cofactor. It depends on [4Fe-4S] cluster as a cofactor.

The enzyme catalyses hydrogen sulfide + 3 NADP(+) + 3 H2O = sulfite + 3 NADPH + 4 H(+). Its pathway is sulfur metabolism; hydrogen sulfide biosynthesis; hydrogen sulfide from sulfite (NADPH route): step 1/1. Its function is as follows. Component of the sulfite reductase complex that catalyzes the 6-electron reduction of sulfite to sulfide. This is one of several activities required for the biosynthesis of L-cysteine from sulfate. This chain is Sulfite reductase [NADPH] hemoprotein beta-component, found in Salmonella typhi.